The sequence spans 138 residues: Transcription antitermination protein NusB (138 aa).

It belongs to the NusB family.

Its function is as follows. Involved in transcription antitermination. Required for transcription of ribosomal RNA (rRNA) genes. Binds specifically to the boxA antiterminator sequence of the ribosomal RNA (rrn) operons. The sequence is that of Transcription antitermination protein NusB from Colwellia psychrerythraea (strain 34H / ATCC BAA-681) (Vibrio psychroerythus).